The chain runs to 109 residues: uncharacterized protein (109 aa).

The protein resides in the mitochondrion. This is an uncharacterized protein from Marchantia polymorpha (Common liverwort).